Consider the following 147-residue polypeptide: Phospholipase A2-beta (147 aa).

Residues 1 to 28 form the signal peptide; the sequence is MMFRTSLMRFAAAFFAIVFVVLVGVARS. 6 disulfides stabilise this stretch: Cys-31/Cys-58, Cys-35/Cys-64, Cys-40/Cys-117, Cys-51/Cys-71, Cys-70/Cys-95, and Cys-77/Cys-88. Tyr-50, Gly-52, and His-55 together coordinate Ca(2+). His-74 is a catalytic residue. Residue Asp-75 participates in Ca(2+) binding. The short motif at 144–147 is the Prevents secretion from ER element; that stretch reads KTEL.

The protein belongs to the phospholipase A2 family. The cofactor is Ca(2+). As to expression, ubiquitous but expressed at a low level. Detected in vascular tissues and in the guard cells. Predominantly detected in pollen.

Its subcellular location is the secreted. It is found in the endoplasmic reticulum. The enzyme catalyses a 1,2-diacyl-sn-glycero-3-phosphocholine + H2O = a 1-acyl-sn-glycero-3-phosphocholine + a fatty acid + H(+). Its activity is regulated as follows. Inhibited by aristolochic acid. PA2 catalyzes the calcium-dependent hydrolysis of the 2-acyl groups in 3-sn-phosphoglycerides. Releases lysophospholipids (LPLs) and free fatty acids (FFAs) from membrane phospholipids in response to hormones and other external stimuli. Regulates the process of cell elongation and plays important roles in shoot gravitropism by mediating auxin-induced cell elongation. Involved in stomatal opening in response to light. Plays a role in pollen development and germination and tube growth. In Arabidopsis thaliana (Mouse-ear cress), this protein is Phospholipase A2-beta (PLA2-BETA).